Reading from the N-terminus, the 503-residue chain is Secreted RxLR effector protein RXLR-C08 (503 aa).

A signal peptide spans 1–22; the sequence is MRLCGVASAFLSTLILIAHIDA. N-linked (GlcNAc...) asparagine glycosylation is found at Asn-27, Asn-35, and Asn-45. Positions 57–60 match the dEER motif; sequence DEER. N-linked (GlcNAc...) asparagine glycosylation is found at Asn-108, Asn-197, and Asn-374.

Belongs to the RxLR effector family.

It localises to the secreted. The protein resides in the host Golgi apparatus. In terms of biological role, secreted effector that suppresses pattern-triggered immunity (PTI) in plant host. The sequence is that of Secreted RxLR effector protein RXLR-C08 from Plasmopara halstedii (Downy mildew of sunflower).